Consider the following 108-residue polypeptide: Large ribosomal subunit protein uL23 (108 aa).

Belongs to the universal ribosomal protein uL23 family. As to quaternary structure, part of the 50S ribosomal subunit. Contacts protein L29, and trigger factor when it is bound to the ribosome.

One of the early assembly proteins it binds 23S rRNA. One of the proteins that surrounds the polypeptide exit tunnel on the outside of the ribosome. Forms the main docking site for trigger factor binding to the ribosome. This Mycoplasmoides gallisepticum (strain R(low / passage 15 / clone 2)) (Mycoplasma gallisepticum) protein is Large ribosomal subunit protein uL23.